A 197-amino-acid polypeptide reads, in one-letter code: Probable S-adenosylmethionine-dependent methyltransferase MJ0882 (197 aa).

S-adenosyl-L-methionine contacts are provided by residues 63–67, aspartate 84, and asparagine 129; that span reads GCGYG. 129–132 contributes to the substrate binding site; it reads NPPI.

It belongs to the methyltransferase superfamily.

In terms of biological role, probable methyltransferase that uses S-adenosylmethionine as the methyl donor. Binds neither NAD nor NADP in vitro. In Methanocaldococcus jannaschii (strain ATCC 43067 / DSM 2661 / JAL-1 / JCM 10045 / NBRC 100440) (Methanococcus jannaschii), this protein is Probable S-adenosylmethionine-dependent methyltransferase MJ0882.